Reading from the N-terminus, the 434-residue chain is Probable exopolygalacturonase X (434 aa).

The first 23 residues, 1–23 (MKFLHTVAQTATLLLSLGASVEG), serve as a signal peptide directing secretion. The tract at residues 35 to 54 (HHPFRPLPASTPRTKTCHVR) is disordered. N-linked (GlcNAc...) asparagine glycans are attached at residues N113, N129, and N199. The stretch at 231–252 (SSNIVIQNSVVNNGDDCVSFKP) is one PbH1 1 repeat. D245 serves as the catalytic Proton donor. C247 and C264 are joined by a disulfide. Residues N253 and N265 are each glycosylated (N-linked (GlcNAc...) asparagine). Residues 254 to 274 (STDILVQNMHCNGSHGISVGS) form a PbH1 2 repeat. H268 is an active-site residue. 5 N-linked (GlcNAc...) asparagine glycosylation sites follow: N292, N297, N329, N354, and N364. The PbH1 3 repeat unit spans residues 327–348 (VSNITYDRMYIENVDWAIEVTQ). The PbH1 4 repeat unit spans residues 362 to 394 (PSNLTISDVHIKNMWGTTSGKRDPNVGTIVCSS). Residues C392 and C398 are joined by a disulfide bond. N-linked (GlcNAc...) asparagine glycans are attached at residues N407 and N430.

This sequence belongs to the glycosyl hydrolase 28 family.

The protein resides in the secreted. It carries out the reaction [(1-&gt;4)-alpha-D-galacturonosyl](n) + H2O = alpha-D-galacturonate + [(1-&gt;4)-alpha-D-galacturonosyl](n-1). In terms of biological role, specific in hydrolyzing the terminal glycosidic bond of polygalacturonic acid and oligogalacturonates. The polypeptide is Probable exopolygalacturonase X (pgaX) (Aspergillus terreus (strain NIH 2624 / FGSC A1156)).